Here is a 914-residue protein sequence, read N- to C-terminus: Eukaryotic initiation factor 4F subunit p130 (914 aa).

A compositionally biased stretch (pro residues) spans 1 to 12 (MTDQRGPPPPHP). Disordered regions lie at residues 1–84 (MTDQ…YNNR), 128–205 (PPYT…NEAV), 240–351 (ERKK…VNKS), and 457–535 (IARN…LVPS). A compositionally biased stretch (polar residues) spans 26-44 (NQYSGANNSQPNNHYNENL). The span at 59–73 (KNGKYGTNKYNNRNN) shows a compositional bias: low complexity. Serine 74 is modified (phosphoserine). Low complexity predominate over residues 145–155 (PKTTKIEITTK). A compositionally biased stretch (basic and acidic residues) spans 156–195 (TGERLNLKKFHEEKKASKGEEKNDGVEQKSKSGTPFEKEA). Threonine 196 carries the post-translational modification Phosphothreonine. An interaction with PAB1 region spans residues 201 to 315 (ANEAVKDTLT…TGSVTKSVTF (115 aa)). Residues 240–263 (ERKKNGLISETEKKQETSNHDNTD) are compositionally biased toward basic and acidic residues. Polar residues-rich tracts occupy residues 298 to 325 (SVKT…SSSQ) and 339 to 348 (ISDTTGGKTV). Residue threonine 301 is modified to Phosphothreonine. Over residues 496-529 (RMGDDRRSNRGYTSRKDREKAAEKAEEQAPKEEI) the composition is skewed to basic and acidic residues. At serine 503 the chain carries Phosphoserine. The 244-residue stretch at 567–810 (ERKMKSLLNK…IDVKELREIK (244 aa)) folds into the MIF4G domain. The tract at residues 833–914 (QLRQKKNSQR…ALMNNDGDSD (82 aa)) is disordered. Residues 841-867 (QRSNSRFNNHNQSNSNRYSSNRRNMQN) show a composition bias toward low complexity. Residues 868–886 (TQRDSFASTKTGSFRNNQR) show a composition bias toward polar residues. The residue at position 913 (serine 913) is a Phosphoserine.

Belongs to the eukaryotic initiation factor 4G family. As to quaternary structure, component of the eIF4F complex, which composition varies with external and internal environmental conditions. It is composed of at least eIF4A (TIF1/TIF2), eIF4E (TIF45) and eIF4G (TIF4631 or TIF4632). Interacts with PAT1 in a RNA-dependent manner.

It is found in the cytoplasm. Component of the eIF4F complex, which interacts with the mRNA cap structure and serves as an initial point of assembly for the translation apparatus. Stimulates translation by interaction with polyadenylate-binding protein PAB1, bringing the 5'- and 3'-ends of the mRNA in proximity. The formation of this circular mRNP structure appears to be critical for the synergistic effects of the cap and the poly(A) tail in facilitating translation initiation, recycling of ribosomes, and mRNA stability. TIF4632 is probably essential when TIF4631 is missing. The polypeptide is Eukaryotic initiation factor 4F subunit p130 (Saccharomyces cerevisiae (strain ATCC 204508 / S288c) (Baker's yeast)).